Consider the following 133-residue polypeptide: Transcription antitermination protein NusB (133 aa).

The protein belongs to the NusB family.

Its function is as follows. Involved in transcription antitermination. Required for transcription of ribosomal RNA (rRNA) genes. Binds specifically to the boxA antiterminator sequence of the ribosomal RNA (rrn) operons. The protein is Transcription antitermination protein NusB of Clostridium botulinum (strain Alaska E43 / Type E3).